The primary structure comprises 904 residues: Translation initiation factor IF-2 (904 aa).

Disordered stretches follow at residues 134–248 (RQRN…GSHV) and 267–315 (HLSA…FERP). A compositionally biased stretch (basic and acidic residues) spans 136–177 (RNLDEQQRLAESDRVRDEEIQRKRDEEQAAKDRAEAERKAAE). Low complexity-rich tracts occupy residues 178 to 230 (EAAA…STPA) and 285 to 303 (GRPG…RGSN). One can recognise a tr-type G domain in the interval 403 to 572 (TRPPVVTIMG…SLQAEVLELK (170 aa)). The segment at 412-419 (GHVDHGKT) is G1. 412–419 (GHVDHGKT) is a binding site for GTP. Positions 437-441 (GITQH) are G2. The segment at 458 to 461 (DTPG) is G3. GTP contacts are provided by residues 458 to 462 (DTPGH) and 512 to 515 (NKID). A G4 region spans residues 512 to 515 (NKID). Residues 548–550 (SAK) form a G5 region.

The protein belongs to the TRAFAC class translation factor GTPase superfamily. Classic translation factor GTPase family. IF-2 subfamily.

Its subcellular location is the cytoplasm. One of the essential components for the initiation of protein synthesis. Protects formylmethionyl-tRNA from spontaneous hydrolysis and promotes its binding to the 30S ribosomal subunits. Also involved in the hydrolysis of GTP during the formation of the 70S ribosomal complex. The sequence is that of Translation initiation factor IF-2 from Xanthomonas oryzae pv. oryzae (strain PXO99A).